Here is a 410-residue protein sequence, read N- to C-terminus: Structural protein ORF142 (410 aa).

Disordered stretches follow at residues 1-24 and 156-197; these read MNQN…HVDT and PTST…VNIS. The segment covering 161 to 188 has biased composition (acidic residues); the sequence is DDNDNENRSDDDDDDDDYRNDREEVEDS.

The protein resides in the virion. This Trichoplusia ni ascovirus 2c (TnAV-2c) protein is Structural protein ORF142.